Reading from the N-terminus, the 419-residue chain is UDP-N-acetylglucosamine 1-carboxyvinyltransferase 2 (419 aa).

24 to 25 (KN) contributes to the phosphoenolpyruvate binding site. Arg94 serves as a coordination point for UDP-N-acetyl-alpha-D-glucosamine. Residue Cys118 is the Proton donor of the active site. 2-(S-cysteinyl)pyruvic acid O-phosphothioketal is present on Cys118. UDP-N-acetyl-alpha-D-glucosamine-binding positions include 123–127 (RPIDQ), Asp307, and Ile329.

This sequence belongs to the EPSP synthase family. MurA subfamily.

It localises to the cytoplasm. The catalysed reaction is phosphoenolpyruvate + UDP-N-acetyl-alpha-D-glucosamine = UDP-N-acetyl-3-O-(1-carboxyvinyl)-alpha-D-glucosamine + phosphate. Its pathway is cell wall biogenesis; peptidoglycan biosynthesis. Cell wall formation. Adds enolpyruvyl to UDP-N-acetylglucosamine. This chain is UDP-N-acetylglucosamine 1-carboxyvinyltransferase 2, found in Staphylococcus aureus (strain MRSA252).